A 241-amino-acid polypeptide reads, in one-letter code: 4-hydroxy-tetrahydrodipicolinate reductase (241 aa).

NAD(+)-binding positions include 7–12 (GVNGHM), 74–76 (GTT), and 98–101 (STNM). The Proton donor/acceptor role is filled by H131. H132 is a binding site for (S)-2,3,4,5-tetrahydrodipicolinate. K135 acts as the Proton donor in catalysis. Position 141–142 (141–142 (GS)) interacts with (S)-2,3,4,5-tetrahydrodipicolinate.

The protein belongs to the DapB family.

Its subcellular location is the cytoplasm. The catalysed reaction is (S)-2,3,4,5-tetrahydrodipicolinate + NAD(+) + H2O = (2S,4S)-4-hydroxy-2,3,4,5-tetrahydrodipicolinate + NADH + H(+). It catalyses the reaction (S)-2,3,4,5-tetrahydrodipicolinate + NADP(+) + H2O = (2S,4S)-4-hydroxy-2,3,4,5-tetrahydrodipicolinate + NADPH + H(+). It participates in amino-acid biosynthesis; L-lysine biosynthesis via DAP pathway; (S)-tetrahydrodipicolinate from L-aspartate: step 4/4. Catalyzes the conversion of 4-hydroxy-tetrahydrodipicolinate (HTPA) to tetrahydrodipicolinate. This Alkaliphilus oremlandii (strain OhILAs) (Clostridium oremlandii (strain OhILAs)) protein is 4-hydroxy-tetrahydrodipicolinate reductase.